Consider the following 409-residue polypeptide: Argininosuccinate synthase (409 aa).

ATP is bound by residues 8-16 (AYSGGLDTS) and Ala-34. Tyr-85 provides a ligand contact to L-citrulline. Gly-115 contacts ATP. The L-aspartate site is built by Thr-117, Asn-121, and Asp-122. L-citrulline is bound at residue Asn-121. Arg-125, Ser-178, Ser-187, Glu-268, and Tyr-280 together coordinate L-citrulline.

The protein belongs to the argininosuccinate synthase family. Type 1 subfamily. As to quaternary structure, homotetramer.

Its subcellular location is the cytoplasm. The enzyme catalyses L-citrulline + L-aspartate + ATP = 2-(N(omega)-L-arginino)succinate + AMP + diphosphate + H(+). It participates in amino-acid biosynthesis; L-arginine biosynthesis; L-arginine from L-ornithine and carbamoyl phosphate: step 2/3. In Thermotoga maritima (strain ATCC 43589 / DSM 3109 / JCM 10099 / NBRC 100826 / MSB8), this protein is Argininosuccinate synthase.